The following is a 910-amino-acid chain: Leucine--tRNA ligase (910 aa).

The 'HIGH' region motif lies at 50–60 (PYTNGSLHVGH). The short motif at 611–615 (KISKS) is the 'KMSKS' region element. ATP is bound at residue lysine 614.

Belongs to the class-I aminoacyl-tRNA synthetase family.

Its subcellular location is the cytoplasm. It catalyses the reaction tRNA(Leu) + L-leucine + ATP = L-leucyl-tRNA(Leu) + AMP + diphosphate. The chain is Leucine--tRNA ligase from Thermoplasma acidophilum (strain ATCC 25905 / DSM 1728 / JCM 9062 / NBRC 15155 / AMRC-C165).